The primary structure comprises 203 residues: Secreted phosphoprotein 24 (203 aa).

The signal sequence occupies residues 1-23; sequence MELATMKTLVMLVLGMHYWCASG. Disulfide bonds link Cys86-Cys96 and Cys109-Cys127. Ser90 is subject to Phosphoserine. A phosphoserine mark is found at Ser137, Ser138, and Ser174.

This sequence belongs to the SPP2 family. Post-translationally, multiply phosphorylated at serine residues. Phosphorylation sites are present in the extracellular medium.

Its subcellular location is the secreted. In terms of biological role, could coordinate an aspect of bone turnover. This chain is Secreted phosphoprotein 24 (Spp2), found in Rattus norvegicus (Rat).